The following is a 273-amino-acid chain: 4-hydroxy-tetrahydrodipicolinate reductase (273 aa).

NAD(+)-binding positions include 8–13 (GCAGNM), Glu34, 102–104 (GTT), and 128–131 (SPNM). Residue His161 is the Proton donor/acceptor of the active site. (S)-2,3,4,5-tetrahydrodipicolinate is bound at residue His162. The active-site Proton donor is Lys165. Residue 171-172 (GT) coordinates (S)-2,3,4,5-tetrahydrodipicolinate.

The protein belongs to the DapB family.

The protein resides in the cytoplasm. It catalyses the reaction (S)-2,3,4,5-tetrahydrodipicolinate + NAD(+) + H2O = (2S,4S)-4-hydroxy-2,3,4,5-tetrahydrodipicolinate + NADH + H(+). The catalysed reaction is (S)-2,3,4,5-tetrahydrodipicolinate + NADP(+) + H2O = (2S,4S)-4-hydroxy-2,3,4,5-tetrahydrodipicolinate + NADPH + H(+). It functions in the pathway amino-acid biosynthesis; L-lysine biosynthesis via DAP pathway; (S)-tetrahydrodipicolinate from L-aspartate: step 4/4. Functionally, catalyzes the conversion of 4-hydroxy-tetrahydrodipicolinate (HTPA) to tetrahydrodipicolinate. The polypeptide is 4-hydroxy-tetrahydrodipicolinate reductase (Methanosphaera stadtmanae (strain ATCC 43021 / DSM 3091 / JCM 11832 / MCB-3)).